The following is an 86-amino-acid chain: Kappa-theraphotoxin-Cg1a 6 (86 aa).

A signal peptide spans 1–21 (MKVSVLITLAVLGVMFVWASA). Residues 22–50 (AELEERGSDQRDSPAWLKSMERIFQSEER) constitute a propeptide that is removed on maturation. Intrachain disulfides connect Cys52-Cys66, Cys59-Cys71, and Cys65-Cys78. Phe84 is modified (phenylalanine amide).

It belongs to the neurotoxin 10 (Hwtx-1) family. 28 (Jztx-11) subfamily. Expressed by the venom gland.

The protein localises to the secreted. Its function is as follows. This toxin acts as a voltage-dependent gating-modifier. It inhibits the sodium conductance (IC(50)=124 nM) and slows the fast inactivation (EC(50)=1180 nM) of Nav1.5/SCN5A. It significantly shifts the activation to more depolarized voltages and decreases the deactivation of Nav1.5 currents upon extreme depolarization, but only slightly affects voltage-dependence of steady-state inactivation. In addition, this toxin causes an approximately five-fold decrease in the rate of recovery from inactivation and an approximately 1.9-fold reduction in the closed-state inactivation rate. This toxin integrates the functions of site 3 toxins (alpha-scorpion toxins) with site 4 toxins (beta-scorpion and spider toxins) by targeting multiple sites on Nav1.5. Also shows inhibition of voltage-gated potassium channels (5 uM completely inhibits Kv2.1/KCNB1, whereas 5 uM moderately inhibits Kv4.2/KCND2 Kv4.1/KCND1 channels). This is Kappa-theraphotoxin-Cg1a 6 from Chilobrachys guangxiensis (Chinese earth tiger tarantula).